Consider the following 311-residue polypeptide: Putative dihydroorotate dehydrogenase A (fumarate) (311 aa).

Substrate-binding positions include lysine 45, 69–73 (NSMGL), and asparagine 128. An FMN-binding site is contributed by 45-46 (KT). Asparagine 128 is a binding site for FMN. Residue cysteine 131 is the Nucleophile of the active site. FMN contacts are provided by lysine 165 and valine 193. Residue 194–195 (NS) participates in substrate binding. Residues glycine 220, 248–249 (GG), and 270–271 (GT) each bind FMN.

This sequence belongs to the dihydroorotate dehydrogenase family. Type 1 subfamily. As to quaternary structure, homodimer. It depends on FMN as a cofactor.

The protein localises to the cytoplasm. The catalysed reaction is (S)-dihydroorotate + fumarate = orotate + succinate. It functions in the pathway pyrimidine metabolism; UMP biosynthesis via de novo pathway. Functionally, catalyzes the conversion of dihydroorotate to orotate with fumarate as the electron acceptor. The polypeptide is Putative dihydroorotate dehydrogenase A (fumarate) (pyrD) (Streptococcus pyogenes serotype M3 (strain SSI-1)).